Reading from the N-terminus, the 305-residue chain is UDP-3-O-acyl-N-acetylglucosamine deacetylase (305 aa).

Zn(2+) is bound by residues H78, H237, and D241. The active-site Proton donor is the H264.

The protein belongs to the LpxC family. Zn(2+) is required as a cofactor.

It carries out the reaction a UDP-3-O-[(3R)-3-hydroxyacyl]-N-acetyl-alpha-D-glucosamine + H2O = a UDP-3-O-[(3R)-3-hydroxyacyl]-alpha-D-glucosamine + acetate. It functions in the pathway glycolipid biosynthesis; lipid IV(A) biosynthesis; lipid IV(A) from (3R)-3-hydroxytetradecanoyl-[acyl-carrier-protein] and UDP-N-acetyl-alpha-D-glucosamine: step 2/6. Functionally, catalyzes the hydrolysis of UDP-3-O-myristoyl-N-acetylglucosamine to form UDP-3-O-myristoylglucosamine and acetate, the committed step in lipid A biosynthesis. The chain is UDP-3-O-acyl-N-acetylglucosamine deacetylase from Ralstonia pickettii (strain 12J).